The primary structure comprises 117 residues: Large ribosomal subunit protein bL19 (117 aa).

Belongs to the bacterial ribosomal protein bL19 family.

Functionally, this protein is located at the 30S-50S ribosomal subunit interface and may play a role in the structure and function of the aminoacyl-tRNA binding site. This chain is Large ribosomal subunit protein bL19, found in Bacteroides thetaiotaomicron (strain ATCC 29148 / DSM 2079 / JCM 5827 / CCUG 10774 / NCTC 10582 / VPI-5482 / E50).